Here is a 196-residue protein sequence, read N- to C-terminus: Phosphate-specific transport system accessory protein PhoU homolog (196 aa).

The protein belongs to the PhoU family. As to quaternary structure, homodimer.

Its subcellular location is the cytoplasm. Its function is as follows. Plays a role in the regulation of phosphate uptake. The sequence is that of Phosphate-specific transport system accessory protein PhoU homolog from Archaeoglobus fulgidus (strain ATCC 49558 / DSM 4304 / JCM 9628 / NBRC 100126 / VC-16).